Here is a 199-residue protein sequence, read N- to C-terminus: Protein ASYMMETRIC LEAVES 2 (199 aa).

Positions 8 to 109 (SPCAACKFLR…IDLSCAKSEL (102 aa)) constitute an LOB domain.

The protein belongs to the LOB domain-containing protein family. As to quaternary structure, homo- and heterodimer with AS1. Interacts with AS1. Part of the AS1 repressor complex composed of AS1, LBD6/AS2 and HDA6. Interacts with LFR. Expressed in young shoots, roots, stems, leaves, flowers and adaxial domains of cotyledonary and leaves primordia.

The protein resides in the nucleus. Negative regulator of cell proliferation in the adaxial side of leaves. Regulates the formation of a symmetric lamina and the establishment of venation. Positively regulates LATERAL ORGAN BOUNDARIES (LOB) within the shoot apex, and the class III HD-ZIP genes REV, PHB, and PHV. Interacts directly with ASYMMETRIC LEAVES 1 (AS1) to repress the knox homeobox genes KNAT1, KNAT2, and KNAT6 and the abaxial determinants ARF3, KAN2 and YAB5. May act in parallel with the RDR6-SGS3-AGO7 pathway, an endogenous RNA silencing pathway, to regulate the leaf morphogenesis. Required for the binding of AS1 to the KNOX genes. Involved in leaf polarity establishment by functioning cooperatively with RH10 or RID2 to repress abaxial genes ARF3, ARF4, KAN1, KAN2, YAB1 and YAB5, and the knox homeobox genes KNAT1, KNAT2, KNAT6, and STM to promote adaxial development in leaf primordia at shoot apical meristems at high temperatures. This is Protein ASYMMETRIC LEAVES 2 from Arabidopsis thaliana (Mouse-ear cress).